The following is a 679-amino-acid chain: Methionine--tRNA ligase (679 aa).

The 'HIGH' region motif lies at 15-25 (PYANGPVHIGH). Zn(2+)-binding residues include Cys-147, Cys-150, Cys-160, and Cys-163. The 'KMSKS' region signature appears at 332-336 (KISTS). Thr-335 is a binding site for ATP. In terms of domain architecture, tRNA-binding spans 578–679 (DFMKLDIRVG…REVKPGSEVK (102 aa)).

This sequence belongs to the class-I aminoacyl-tRNA synthetase family. MetG type 1 subfamily. As to quaternary structure, homodimer. It depends on Zn(2+) as a cofactor.

The protein localises to the cytoplasm. It catalyses the reaction tRNA(Met) + L-methionine + ATP = L-methionyl-tRNA(Met) + AMP + diphosphate. Is required not only for elongation of protein synthesis but also for the initiation of all mRNA translation through initiator tRNA(fMet) aminoacylation. The chain is Methionine--tRNA ligase from Bacteroides fragilis (strain ATCC 25285 / DSM 2151 / CCUG 4856 / JCM 11019 / LMG 10263 / NCTC 9343 / Onslow / VPI 2553 / EN-2).